Reading from the N-terminus, the 1012-residue chain is Klotho (1012 aa).

A signal peptide spans 1–33 (MPASAPPRRPRPPPPSLSLLLVLLGLGGRRLRA). The Extracellular segment spans residues 34-981 (EPGDGAQTWA…ECSFFHTRKS (948 aa)). 2 glycosyl hydrolase-1 regions span residues 57-506 (FQGT…KNGF) and 515-953 (LEGT…SNGF). N-linked (GlcNAc...) asparagine glycans are attached at residues Asn-106, Asn-159, Asn-283, Asn-344, Asn-607, Asn-612, and Asn-694. The helical transmembrane segment at 982–1002 (LLAFIAFLFFASIISLSLIFY) threads the bilayer. At 1003-1012 (YSKKGRRSYK) the chain is on the cytoplasmic side.

The protein belongs to the glycosyl hydrolase 1 family. Klotho subfamily. As to quaternary structure, homodimer. Interacts with FGF23 and FGFR1. Post-translationally, N-glycosylated. In terms of tissue distribution, present in cortical renal tubules (at protein level). Soluble peptide is present in serum and cerebrospinal fluid. Expressed in kidney, placenta, small intestine and prostate. Down-regulated in renal cell carcinomas, hepatocellular carcinomas, and in chronic renal failure kidney.

The protein resides in the cell membrane. It localises to the apical cell membrane. The protein localises to the secreted. The catalysed reaction is a beta-D-glucuronoside + H2O = D-glucuronate + an alcohol. May have weak glycosidase activity towards glucuronylated steroids. However, it lacks essential active site Glu residues at positions 239 and 872, suggesting it may be inactive as a glycosidase in vivo. May be involved in the regulation of calcium and phosphorus homeostasis by inhibiting the synthesis of active vitamin D. Essential factor for the specific interaction between FGF23 and FGFR1. Functionally, the Klotho peptide generated by cleavage of the membrane-bound isoform may be an anti-aging circulating hormone which would extend life span by inhibiting insulin/IGF1 signaling. This is Klotho (KL) from Homo sapiens (Human).